Reading from the N-terminus, the 257-residue chain is 3-methyl-2-oxobutanoate hydroxymethyltransferase (257 aa).

Positions 42 and 86 each coordinate Mg(2+). 3-methyl-2-oxobutanoate-binding positions include 42 to 43 (DS), D86, and K116. E118 serves as a coordination point for Mg(2+). E185 functions as the Proton acceptor in the catalytic mechanism.

The protein belongs to the PanB family. As to quaternary structure, homodecamer; pentamer of dimers. Requires Mg(2+) as cofactor.

It is found in the cytoplasm. The enzyme catalyses 3-methyl-2-oxobutanoate + (6R)-5,10-methylene-5,6,7,8-tetrahydrofolate + H2O = 2-dehydropantoate + (6S)-5,6,7,8-tetrahydrofolate. It participates in cofactor biosynthesis; (R)-pantothenate biosynthesis; (R)-pantoate from 3-methyl-2-oxobutanoate: step 1/2. Functionally, catalyzes the reversible reaction in which hydroxymethyl group from 5,10-methylenetetrahydrofolate is transferred onto alpha-ketoisovalerate to form ketopantoate. This chain is 3-methyl-2-oxobutanoate hydroxymethyltransferase, found in Prochlorococcus marinus (strain MIT 9215).